Here is a 350-residue protein sequence, read N- to C-terminus: MSHQTGIQASEDVKEIFARARNGKYRLLKISIENEQLVVGSCSPPSDSWEQDYDPFVLPLLEDKQPCYVLFRLDSQNAQGYEWIFIAWSPDHSHVRQKMLYAATRATLKKEFGGGHIKDEVFGTVKEDVSLHGYRKYLLSQSSPAPLTAAEEELRQIKISEVQTDVSVDTKHQTLQGVAFPISRDAFQALEKLSKRQLNYVQLEIDIKNETIILANTENTELKDLPKRIPKDSARYHFFLYKHSHEGDYLESIVFIYSMPGYTCSIRERMLYSSCKSPLLDIVERQLQMDVIRKIEIDNGDELTADFLYDEVHPKQHAHKQSFAKPKGPAGKRGIRRLIRGPAEAEATTD.

At serine 2 the chain carries N-acetylserine. Residues 2 to 139 form the ADF-H 1 domain; sequence SHQTGIQASE…SLHGYRKYLL (138 aa). Phosphoserine occurs at positions 143 and 277. The 139-residue stretch at 175–313 folds into the ADF-H 2 domain; the sequence is LQGVAFPISR…TADFLYDEVH (139 aa). Residue tyrosine 309 is modified to Phosphotyrosine. The segment at 316–350 is disordered; that stretch reads QHAHKQSFAKPKGPAGKRGIRRLIRGPAEAEATTD. Threonine 349 bears the Phosphothreonine mark.

It belongs to the actin-binding proteins ADF family. Twinfilin subfamily. Interacts with G-actin; ADP-actin form and capping protein (CP). May also be able to interact with TWF2 and phosphoinositides, PI(4,5)P2. When bound to PI(4,5)P2, it is down-regulated. Interacts with ACTG1. Post-translationally, phosphorylated on serine and threonine residues.

It localises to the cytoplasm. The protein resides in the cytoskeleton. Actin-binding protein involved in motile and morphological processes. Inhibits actin polymerization, likely by sequestering G-actin. By capping the barbed ends of filaments, it also regulates motility. Seems to play an important role in clathrin-mediated endocytosis and distribution of endocytic organelles. In Rattus norvegicus (Rat), this protein is Twinfilin-1 (Twf1).